Reading from the N-terminus, the 64-residue chain is Copper-specific metallothionein-2 (64 aa).

C3, C5, C9, C11, C16, C18, C22, C24, C27, C33, C40, C44, C50, C52, C56, and C58 together coordinate Cu(+).

It belongs to the metallothionein superfamily. Type 2 family.

The metallothioneins are involved in the cellular sequestration of toxic metal ions and regulation of essential trace elements. This isoform binds exclusively copper. The polypeptide is Copper-specific metallothionein-2 (Callinectes sapidus (Blue crab)).